The following is a 528-amino-acid chain: Beta-galactoside alpha-2,6-sialyltransferase 2 (528 aa).

Topologically, residues 1–10 are cytoplasmic; it reads MKPNLKQWKQ. The chain crosses the membrane as a helical; Signal-anchor for type II membrane protein span at residues 11 to 31; sequence LMLFGIFAWGLLFLVIFIYFT. Topologically, residues 32–528 are lumenal; it reads DSNSAEPVPS…CPERNNFPPL (497 aa). N-linked (GlcNAc...) asparagine glycans are attached at residues Asn167, Asn308, and Asn338. 3 disulfide bridges follow: Cys254–Cys519, Cys297–Cys448, and Cys466–Cys477.

The protein belongs to the glycosyltransferase 29 family.

The protein localises to the golgi apparatus. Its subcellular location is the golgi stack membrane. The catalysed reaction is a beta-D-galactoside + CMP-N-acetyl-beta-neuraminate = an N-acetyl-alpha-neuraminyl-(2-&gt;6)-beta-D-galactosyl derivative + CMP + H(+). Its function is as follows. Transfers sialic acid from the donor of substrate CMP-sialic acid to galactose containing acceptor substrates. The protein is Beta-galactoside alpha-2,6-sialyltransferase 2 (ST6GAL2) of Gallus gallus (Chicken).